The following is a 279-amino-acid chain: Aldo-keto reductase Mvan_2161 (279 aa).

The active-site Proton donor is tyrosine 54. Residues leucine 194, valine 196, isoleucine 232, arginine 234, serine 235, arginine 240, serine 243, asparagine 244, and arginine 270 each contribute to the NADPH site.

It belongs to the aldo/keto reductase family.

This is Aldo-keto reductase Mvan_2161 from Mycolicibacterium vanbaalenii (strain DSM 7251 / JCM 13017 / BCRC 16820 / KCTC 9966 / NRRL B-24157 / PYR-1) (Mycobacterium vanbaalenii).